A 351-amino-acid chain; its full sequence is MAANTTSTAATSSPGGMSLSLLPIVLLSVALVVGLPGNSFVVWSILKRMQKRSVTALLVLNLALADLAVLLTAPFFLHFLARGTWSFEVTGCRLCHYVCGVSMYASVLLITIMSLDRSLAVARPFVSQKVRTKAFARWVLAGIWVVSFLLAIPVLVYRTVTPKNKTLICDSRYPSDGHKVFHLLFEAITGFLLPFLAVVASYSDIGRRLQARRFRRSRRTGRLVVLIILAFAAFWLPYHLVNLVEAGRTLAGWDKNSPAGQRLKLARYVLIALAFLSSSVNPVLYACAGGGLLRSAGVGFVVKLLEGTGSEVSSTRRGGTLVQTPKATPTCPEPGPTDSFMTSSTPPESSK.

Topologically, residues 1 to 21 (MAANTTSTAATSSPGGMSLSL) are extracellular. N4 carries an N-linked (GlcNAc...) asparagine glycan. The helical transmembrane segment at 22-44 (LPIVLLSVALVVGLPGNSFVVWS) threads the bilayer. At 45-56 (ILKRMQKRSVTA) the chain is on the cytoplasmic side. Residues 57 to 77 (LLVLNLALADLAVLLTAPFFL) traverse the membrane as a helical segment. Residues 78-93 (HFLARGTWSFEVTGCR) are Extracellular-facing. The helical transmembrane segment at 94–115 (LCHYVCGVSMYASVLLITIMSL) threads the bilayer. Over 116–140 (DRSLAVARPFVSQKVRTKAFARWVL) the chain is Cytoplasmic. A helical transmembrane segment spans residues 141–161 (AGIWVVSFLLAIPVLVYRTVT). The Extracellular segment spans residues 162–179 (PKNKTLICDSRYPSDGHK). Residue N164 is glycosylated (N-linked (GlcNAc...) asparagine). The helical transmembrane segment at 180–200 (VFHLLFEAITGFLLPFLAVVA) threads the bilayer. Residues 201–222 (SYSDIGRRLQARRFRRSRRTGR) lie on the Cytoplasmic side of the membrane. The chain crosses the membrane as a helical span at residues 223-243 (LVVLIILAFAAFWLPYHLVNL). Topologically, residues 244–268 (VEAGRTLAGWDKNSPAGQRLKLARY) are extracellular. The helical transmembrane segment at 269–289 (VLIALAFLSSSVNPVLYACAG) threads the bilayer. Over 290–351 (GGLLRSAGVG…TSSTPPESSK (62 aa)) the chain is Cytoplasmic. 2 stretches are compositionally biased toward polar residues: residues 311–327 (EVSSTRRGGTLVQTPKA) and 339–351 (SFMTSSTPPESSK). A disordered region spans residues 311 to 351 (EVSSTRRGGTLVQTPKATPTCPEPGPTDSFMTSSTPPESSK).

This sequence belongs to the G-protein coupled receptor 1 family. Post-translationally, phosphorylated by GRK6 upon leukotriene B4 binding; which promotes desensitization. As to expression, exclusively expressed in polymorphonuclear leukocytes.

Its subcellular location is the cell membrane. Its function is as follows. Receptor for leukotriene B4, a potent chemoattractant involved in inflammation and immune response. This chain is Leukotriene B4 receptor 1 (Ltb4r), found in Rattus norvegicus (Rat).